The chain runs to 670 residues: Carnitine O-acetyltransferase, mitochondrial (670 aa).

Histidine 378 acts as the Proton acceptor in catalysis. Residues lysine 461 and 465–472 (KRHGMSPD) each bind CoA. Tyrosine 494 contributes to the (R)-carnitine binding site. Position 498 (serine 498) interacts with CoA. Threonine 507 contacts (R)-carnitine. Position 597 (glutamine 597) interacts with CoA. A Microbody targeting signal motif is present at residues 668–670 (AKL).

This sequence belongs to the carnitine/choline acetyltransferase family.

The protein resides in the mitochondrion inner membrane. Its subcellular location is the peroxisome. It catalyses the reaction (R)-carnitine + acetyl-CoA = O-acetyl-(R)-carnitine + CoA. In terms of biological role, carnitine acetylase is specific for short chain fatty acids. Carnitine acetylase seems to affect the flux through the pyruvate dehydrogenase complex. It may be involved as well in the transport of acetyl-CoA into mitochondria. This chain is Carnitine O-acetyltransferase, mitochondrial (CAT2), found in Saccharomyces cerevisiae (strain ATCC 204508 / S288c) (Baker's yeast).